Here is a 148-residue protein sequence, read N- to C-terminus: Hut operon positive regulatory protein (148 aa).

Belongs to the HutP family. Homohexamer.

Functionally, antiterminator that binds to cis-acting regulatory sequences on the mRNA in the presence of histidine, thereby suppressing transcription termination and activating the hut operon for histidine utilization. The sequence is that of Hut operon positive regulatory protein from Bacillus velezensis (strain DSM 23117 / BGSC 10A6 / LMG 26770 / FZB42) (Bacillus amyloliquefaciens subsp. plantarum).